The chain runs to 437 residues: CCA-adding enzyme (437 aa).

ATP is bound by residues Ser-47 and Arg-50. CTP-binding residues include Ser-47 and Arg-50. Residues Glu-59, Asp-61, and Asp-110 each contribute to the Mg(2+) site. The ATP site is built by His-133, Lys-152, and Tyr-161. The CTP site is built by His-133, Lys-152, and Tyr-161.

Belongs to the tRNA nucleotidyltransferase/poly(A) polymerase family. Archaeal CCA-adding enzyme subfamily. Homodimer. Requires Mg(2+) as cofactor.

The enzyme catalyses a tRNA precursor + 2 CTP + ATP = a tRNA with a 3' CCA end + 3 diphosphate. It catalyses the reaction a tRNA with a 3' CCA end + 2 CTP + ATP = a tRNA with a 3' CCACCA end + 3 diphosphate. Catalyzes the addition and repair of the essential 3'-terminal CCA sequence in tRNAs without using a nucleic acid template. Adds these three nucleotides in the order of C, C, and A to the tRNA nucleotide-73, using CTP and ATP as substrates and producing inorganic pyrophosphate. tRNA 3'-terminal CCA addition is required both for tRNA processing and repair. Also involved in tRNA surveillance by mediating tandem CCA addition to generate a CCACCA at the 3' terminus of unstable tRNAs. While stable tRNAs receive only 3'-terminal CCA, unstable tRNAs are marked with CCACCA and rapidly degraded. The structural flexibility of RNA controls the choice between CCA versus CCACCA addition: following the first CCA addition cycle, nucleotide-binding to the active site triggers a clockwise screw motion, producing torque on the RNA. This ejects stable RNAs, whereas unstable RNAs are refolded while bound to the enzyme and subjected to a second CCA catalytic cycle. This is CCA-adding enzyme from Archaeoglobus fulgidus (strain ATCC 49558 / DSM 4304 / JCM 9628 / NBRC 100126 / VC-16).